A 379-amino-acid chain; its full sequence is Cobalt-precorrin-5B C(1)-methyltransferase (379 aa).

The protein belongs to the CbiD family.

It catalyses the reaction Co-precorrin-5B + S-adenosyl-L-methionine = Co-precorrin-6A + S-adenosyl-L-homocysteine. Its pathway is cofactor biosynthesis; adenosylcobalamin biosynthesis; cob(II)yrinate a,c-diamide from sirohydrochlorin (anaerobic route): step 6/10. Its function is as follows. Catalyzes the methylation of C-1 in cobalt-precorrin-5B to form cobalt-precorrin-6A. The protein is Cobalt-precorrin-5B C(1)-methyltransferase of Klebsiella pneumoniae subsp. pneumoniae (strain ATCC 700721 / MGH 78578).